The following is a 156-amino-acid chain: H/ACA ribonucleoprotein complex subunit 2-like protein (156 aa).

It belongs to the eukaryotic ribosomal protein eL8 family. Component of the small nucleolar ribonucleoprotein particle containing H/ACA-type snoRNAs (H/ACA snoRNPs).

The protein localises to the nucleus. It localises to the nucleolus. Functionally, required for ribosome biogenesis. Part of a complex which catalyzes pseudouridylation of rRNA. This involves the isomerization of uridine such that the ribose is subsequently attached to C5, instead of the normal N1. Pseudouridine ('psi') residues may serve to stabilize the conformation of rRNAs. The chain is H/ACA ribonucleoprotein complex subunit 2-like protein from Arabidopsis thaliana (Mouse-ear cress).